Consider the following 30-residue polypeptide: U1-poneritoxin-Ni3b (30 aa).

It belongs to the ponericin-G family. As to expression, expressed by the venom gland.

The protein resides in the secreted. Functionally, shows a broad spectrum of activity against both Gram-positive and Gram-negative bacteria. Also has antimicrobial activity against S.cerevisiae. Has insecticidal and non-hemolytic activity. The polypeptide is U1-poneritoxin-Ni3b (Neoponera inversa (Ant)).